The following is a 385-amino-acid chain: Effector protein hopAB3 (385 aa).

Disordered regions lie at residues 1-61 (MVGI…AGRP), 73-139 (TREW…SPLY), and 215-293 (ADSQ…PRIN). The interval 1-333 (MVGISGRAGP…INMEDLRAAL (333 aa)) is host recognition. The segment covering 217–234 (SQQAARAPARTPPRSSVR) has biased composition (low complexity). Composition is skewed to polar residues over residues 245-256 (ATESSSGSNQRS) and 265-283 (MTSNQRRPSSASNASTSQR).

Belongs to the HopAB family. In terms of assembly, interacts physically with plant cell Pto.

The protein resides in the secreted. Functionally, effector protein involved in gene-for-gene resistance in tomato plants. It is recognized by the host Pto resistance protein and elicits Pto and Prf-dependent hypersensitive response (HR) and programmed cell death (PCD), resulting in host immunity. In susceptible plants, promotes virulence, in part, by enhancing the development of disease symptoms and bacterial growth. This Pseudomonas syringae pv. maculicola protein is Effector protein hopAB3 (hopAB3).